The sequence spans 587 residues: Protein FRIGIDA-ESSENTIAL 1 (587 aa).

The C3H1-type zinc-finger motif lies at 96-123 (KRAALPCKFFAKGWCFNGVSCKFLHVKE). 3 disordered regions span residues 264 to 346 (DMGS…SFTI), 368 to 421 (GDRP…HQET), and 467 to 492 (IKPA…SDEI). Low complexity predominate over residues 294–304 (NGNSLSGSGSL). Basic and acidic residues predominate over residues 470-479 (AGHDSWHRSD).

In terms of assembly, component of the transcription activator complex FRI-C composed of FRI, FRL1, SUF4, FLX and FES1. Interacts with FLX, (via C-terminus) with FRI (via C-terminus), and with RIN1, a component of the SWR1 chromatin-remodeling complex. Expressed in root and shoot apices and vasculature.

It localises to the nucleus. Functionally, transcriptional activator involved in the FRIGIDA-mediated vernalization pathway, but not in the autonomous flowering pathway. Acts cooperatively with FRI (FRIGIDA) or FRL1 (FRIGIDA-LIKE 1) to promote FLC (FLOWERING LOCUS C) expression. Required for the stabilization of the FRI-C complex. The chain is Protein FRIGIDA-ESSENTIAL 1 (FES1) from Arabidopsis thaliana (Mouse-ear cress).